The chain runs to 1357 residues: DNA-directed RNA polymerase subunit beta (1357 aa).

The protein belongs to the RNA polymerase beta chain family. The RNAP catalytic core consists of 2 alpha, 1 beta, 1 beta' and 1 omega subunit. When a sigma factor is associated with the core the holoenzyme is formed, which can initiate transcription.

It carries out the reaction RNA(n) + a ribonucleoside 5'-triphosphate = RNA(n+1) + diphosphate. Functionally, DNA-dependent RNA polymerase catalyzes the transcription of DNA into RNA using the four ribonucleoside triphosphates as substrates. This Pseudomonas fluorescens (strain ATCC BAA-477 / NRRL B-23932 / Pf-5) protein is DNA-directed RNA polymerase subunit beta.